The primary structure comprises 251 residues: MLLIPAIDLKDGQCVRLKQGDMDQATIFSEDPAAMARKWVDLGARRLHLVDLNGAFAGKPKNLEAIEAILGEVGDEIPVQLGGGIRSLETIEKYLDAGLSYVIIGTAAVKDPGFLRDACSAFAGNIIVGLDAKDGKVATDGWSKLTGHEVIDLAQKFEDYGVESIVYTDIGRDGMLQGINIEATVKLAQAVGIPVIASGGLSNIVDIEKLCEVEDEGIEGVICGRAIYSGDLDFAAAQKRADELNGELDDA.

Asp8 (proton acceptor) is an active-site residue. The active-site Proton donor is Asp131.

The protein belongs to the HisA/HisF family.

The protein localises to the cytoplasm. The catalysed reaction is 1-(5-phospho-beta-D-ribosyl)-5-[(5-phospho-beta-D-ribosylamino)methylideneamino]imidazole-4-carboxamide = 5-[(5-phospho-1-deoxy-D-ribulos-1-ylimino)methylamino]-1-(5-phospho-beta-D-ribosyl)imidazole-4-carboxamide. Its pathway is amino-acid biosynthesis; L-histidine biosynthesis; L-histidine from 5-phospho-alpha-D-ribose 1-diphosphate: step 4/9. The protein is 1-(5-phosphoribosyl)-5-[(5-phosphoribosylamino)methylideneamino] imidazole-4-carboxamide isomerase of Burkholderia thailandensis (strain ATCC 700388 / DSM 13276 / CCUG 48851 / CIP 106301 / E264).